The primary structure comprises 347 residues: Glucose 1-dehydrogenase (347 aa).

Residue Cys-39 participates in Zn(2+) binding. Substrate is bound at residue Thr-41. The Zn(2+) site is built by His-64 and Glu-65. Residues Glu-110 and Glu-146 each contribute to the substrate site. Glu-146 contacts Zn(2+). NADP(+) is bound by residues 178–181 (AGPV), 260–262 (LGV), and 289–291 (SVN). Residue Asn-291 participates in substrate binding.

This sequence belongs to the zinc-containing alcohol dehydrogenase family. Glucose 1-dehydrogenase subfamily. In terms of assembly, homodimer. Zn(2+) is required as a cofactor.

It carries out the reaction D-glucose + NAD(+) = D-glucono-1,5-lactone + NADH + H(+). It catalyses the reaction D-glucose + NADP(+) = D-glucono-1,5-lactone + NADPH + H(+). Catalyzes the NAD(P)(+)-dependent oxidation of D-glucose to D-gluconate via gluconolactone. To a lesser extent, is also active with xylose as substrate, but mannose, arabinose, galactose, fructose 6-phosphate, glucose 6-phosphate, glycerinaldehyde 3-phosphate, ribose, sorbitol, ethanol, erythritol, or lactose are not oxidized by the enzyme. Can utilize both NAD(+) and NADP(+) as electron acceptor, with a marked preference for NADP(+). Is involved in the degradation of glucose through a non-phosphorylative variant of the Entner-Doudoroff pathway. The sequence is that of Glucose 1-dehydrogenase (gdh) from Thermoproteus tenax (strain ATCC 35583 / DSM 2078 / JCM 9277 / NBRC 100435 / Kra 1).